Here is a 668-residue protein sequence, read N- to C-terminus: MNPSTHVSSNGPTTPPHGPHTTFLPPTSPAPSTSSVAAATLCSPQRQAVSRYSGWSTEYTQWHSDLTTELLWHAHPRQVPMDEALAAAAAASYQVNPQHPANRYRHYEFQTLSLGTSEVDELLNCCAEETTCGGTQSTVLTNATNTTSCGGAVAGSSNAGPAGASAACDLDAELAGLETSAADFEQLRRLCAPLAIDTRCNLCAIISICLKQDCDQSWLLEYSLLCFKCSYAPRAALSTLIIMSEFTHLLQQHFSDLRIDDLFRHHVLTVFDFHLHFFINRCFEKQVGDAVDNENVTLNHLAVVRAMVMGEDTVPYNKPRRHPQQKQKNNPYHVEVPQELIDNFLEHSSPSRDRFVQLLFYMWAGTGVMSTTPLTELTHTKFARLDALSTASEREDARMMMEEEEDEEGGEKGGDDPGRHNGGGTSGGFSESTLKKNVGPIYLCPVPAFFTKNQTSTVCLLCELMACSYYDNVVLRELYRRVVSYCQNNVKMVDRIQLVLADLLRECTSPLGAAHEDVARCGLEAPTSPGGDSDYHGLSGVDGALARPDPVFCHVLRQAGVTGIYKHFFCDPQCAGNIRVTNEAVLFGHLHPHHVQEVKLAICHDNYYISRLPRRVWLCITLFKAFQITKRTYKGKVHLADFMRDFTQLLENCDIKLVDPTYVIDKYV.

Residues M1–N10 are compositionally biased toward polar residues. The segment at M1–S35 is disordered. Positions P19 to S35 are enriched in low complexity. Residues C200, C203, H276, and C282 each contribute to the Zn(2+) site. Residues C200–C282 form a zinc finger 1 region. 2 stretches are compositionally biased toward basic and acidic residues: residues S392–M401 and G410–R419. Residues S392–S430 are disordered. Zn(2+) contacts are provided by C459, C462, H567, and C574. Positions C459–C574 are zinc finger 2.

The protein belongs to the herpesviridae UL32 protein family.

Its subcellular location is the host cytoplasm. The protein localises to the host nucleus. Plays a role in efficient localization of neo-synthesized capsids to nuclear replication compartments, thereby controlling cleavage and packaging of virus genomic DNA. The chain is Packaging protein UL32 homolog (UL52) from Homo sapiens (Human).